The following is a 318-amino-acid chain: Glycine--tRNA ligase alpha subunit (318 aa).

The interval 298-318 (EAGGSSPSTSRQGEAPRGESQ) is disordered. The segment covering 300–309 (GGSSPSTSRQ) has biased composition (polar residues).

This sequence belongs to the class-II aminoacyl-tRNA synthetase family. Tetramer of two alpha and two beta subunits.

The protein localises to the cytoplasm. It catalyses the reaction tRNA(Gly) + glycine + ATP = glycyl-tRNA(Gly) + AMP + diphosphate. In Rhodopseudomonas palustris (strain BisB18), this protein is Glycine--tRNA ligase alpha subunit.